The following is a 690-amino-acid chain: Elongation factor G (690 aa).

The 275-residue stretch at 8-282 (EKTRNIGIMA…AVVAYMPSPL (275 aa)) folds into the tr-type G domain. GTP contacts are provided by residues 17–24 (AHIDAGKT), 81–85 (DTPGH), and 135–138 (NKMD).

This sequence belongs to the TRAFAC class translation factor GTPase superfamily. Classic translation factor GTPase family. EF-G/EF-2 subfamily.

The protein localises to the cytoplasm. Its function is as follows. Catalyzes the GTP-dependent ribosomal translocation step during translation elongation. During this step, the ribosome changes from the pre-translocational (PRE) to the post-translocational (POST) state as the newly formed A-site-bound peptidyl-tRNA and P-site-bound deacylated tRNA move to the P and E sites, respectively. Catalyzes the coordinated movement of the two tRNA molecules, the mRNA and conformational changes in the ribosome. The protein is Elongation factor G of Alkaliphilus oremlandii (strain OhILAs) (Clostridium oremlandii (strain OhILAs)).